A 287-amino-acid chain; its full sequence is tRNA (guanine(9)-N1)-methyltransferase (287 aa).

The interval 1-27 (MSDTSDLVDGKWQRLPPVPEGMSKSQW) is disordered. The region spanning 79–272 (EPRVNRDQVA…SVIPSRKLDP (194 aa)) is the SAM-dependent MTase TRM10-type domain. S-adenosyl-L-methionine-binding positions include 179-180 (LT), Gly-199, 203-207 (DKNRH), Cys-211, Leu-225, and 237-239 (KVL). Asp-203 functions as the Proton acceptor in the catalytic mechanism. Residues 268–278 (RKLDPVKEKEQ) show a composition bias toward basic and acidic residues. The interval 268–287 (RKLDPVKEKEQQQQQQQQQQ) is disordered.

Belongs to the class IV-like SAM-binding methyltransferase superfamily. TRM10 family. As to quaternary structure, monomer.

The protein localises to the cytoplasm. It localises to the nucleus. It carries out the reaction guanosine(9) in tRNA + S-adenosyl-L-methionine = N(1)-methylguanosine(9) in tRNA + S-adenosyl-L-homocysteine + H(+). In terms of biological role, S-adenosyl-L-methionine-dependent guanine N(1)-methyltransferase that catalyzes the formation of N(1)-methylguanine at position 9 (m1G9) in cytoplasmic tRNA. The chain is tRNA (guanine(9)-N1)-methyltransferase from Candida glabrata (strain ATCC 2001 / BCRC 20586 / JCM 3761 / NBRC 0622 / NRRL Y-65 / CBS 138) (Yeast).